Consider the following 417-residue polypeptide: Serine--tRNA ligase (417 aa).

L-serine is bound at residue 224–226 (TSE). ATP contacts are provided by residues 255–257 (RRE) and Val271. L-serine is bound at residue Glu278. Position 342-345 (342-345 (ELTS)) interacts with ATP. L-serine is bound at residue Thr377.

This sequence belongs to the class-II aminoacyl-tRNA synthetase family. Type-1 seryl-tRNA synthetase subfamily. As to quaternary structure, homodimer. The tRNA molecule binds across the dimer.

It is found in the cytoplasm. The catalysed reaction is tRNA(Ser) + L-serine + ATP = L-seryl-tRNA(Ser) + AMP + diphosphate + H(+). It carries out the reaction tRNA(Sec) + L-serine + ATP = L-seryl-tRNA(Sec) + AMP + diphosphate + H(+). The protein operates within aminoacyl-tRNA biosynthesis; selenocysteinyl-tRNA(Sec) biosynthesis; L-seryl-tRNA(Sec) from L-serine and tRNA(Sec): step 1/1. In terms of biological role, catalyzes the attachment of serine to tRNA(Ser). Is also able to aminoacylate tRNA(Sec) with serine, to form the misacylated tRNA L-seryl-tRNA(Sec), which will be further converted into selenocysteinyl-tRNA(Sec). This is Serine--tRNA ligase from Mycobacterium leprae (strain TN).